A 147-amino-acid polypeptide reads, in one-letter code: Effector TSP1 (147 aa).

Positions Met1–Ala19 are cleaved as a signal peptide. 2 cysteine pairs are disulfide-bonded: Cys44-Cys51 and Cys67-Cys87.

As to quaternary structure, homodimer.

It is found in the secreted. Functionally, stimulates salicylic acid signaling in host plant roots. The polypeptide is Effector TSP1 (Hypocrea virens (strain Gv29-8 / FGSC 10586) (Gliocladium virens)).